Reading from the N-terminus, the 186-residue chain is Large ribosomal subunit protein bL12c (186 aa).

Residues 1 to 11 (MASTLSTITLR) show a composition bias toward polar residues. Disordered stretches follow at residues 1–23 (MASTLSTITLRSPSPSTASSTHA) and 162–186 (EGVSKDEAEDAKKQLEEAGAKVSIA). The N-terminal 53 residues, 1-53 (MASTLSTITLRSPSPSTASSTHASIPFPKKALEFPIRTPKLHHRRATFLRPLA), are a transit peptide targeting the chloroplast. Low complexity predominate over residues 12 to 23 (SPSPSTASSTHA). The span at 162–180 (EGVSKDEAEDAKKQLEEAG) shows a compositional bias: basic and acidic residues.

This sequence belongs to the bacterial ribosomal protein bL12 family.

The protein resides in the plastid. It is found in the chloroplast. This is Large ribosomal subunit protein bL12c (RPL12) from Nicotiana tabacum (Common tobacco).